A 515-amino-acid chain; its full sequence is E3 ubiquitin-protein ligase RNF217 (515 aa).

Disordered stretches follow at residues 1-125 (MGEE…VLAQ) and 147-189 (PEAP…ADPL). Positions 10 to 22 (GSGGARASGGGSA) are enriched in gly residues. 2 stretches are compositionally biased toward low complexity: residues 39 to 49 (GPRAAASSSRP) and 147 to 157 (PEAPSAESPSP). Residues 158 to 178 (SESPPQAPLGPIPASPPPSFP) show a composition bias toward pro residues. Over residues 179-189 (SSPLSLPADPL) the composition is skewed to low complexity. The TRIAD supradomain stretch occupies residues 232-451 (MVLMCRVCLE…LSIFGCKYRY (220 aa)). Zn(2+) is bound by residues Cys-236, Cys-239, Cys-256, Cys-259, Cys-356, Cys-359, His-364, Cys-369, Cys-396, and Cys-399. The segment at 236–282 (CRVCLEDKPIKPLPCCKKAVCEECLKIYLSSQVQLGQVEIKCPVTEC) adopts an RING-type 1 zinc-finger fold. Residues 301-369 (IKYKYFLELG…HSPWHEGVNC (69 aa)) form an IBR-type zinc finger. The segment at 396–425 (CPKCKIHIQRTEGCDHMTCSQCNTNFCYRC) adopts an RING-type 2; atypical zinc-finger fold. The active site involves Cys-409. Residues Cys-414, Cys-417, Cys-422, Cys-425, His-438, and Cys-447 each contribute to the Zn(2+) site. The chain crosses the membrane as a helical span at residues 476-496 (LILVLGLALGAIAVVIGLFVF).

Belongs to the RBR family. RNF217 subfamily. Interacts with HAX1.

It is found in the membrane. Its subcellular location is the cytoplasm. It catalyses the reaction [E2 ubiquitin-conjugating enzyme]-S-ubiquitinyl-L-cysteine + [acceptor protein]-L-lysine = [E2 ubiquitin-conjugating enzyme]-L-cysteine + [acceptor protein]-N(6)-ubiquitinyl-L-lysine.. It participates in protein modification; protein ubiquitination. Functionally, E3 ubiquitin-protein ligase which accepts ubiquitin from E2 ubiquitin-conjugating enzymes in the form of a thioester and then directly transfers the ubiquitin to targeted substrates. Mediates the degradation of the iron exporter ferroportin/SLC40A1 and thus regulates iron homeostasis. The sequence is that of E3 ubiquitin-protein ligase RNF217 (Rnf217) from Mus musculus (Mouse).